A 146-amino-acid polypeptide reads, in one-letter code: Hemoglobin subunit beta (146 aa).

Residues 2–146 (HWSAEEKQLI…VAHALARKYH (145 aa)) form the Globin domain. Heme b is bound by residues histidine 63 and histidine 92.

The protein belongs to the globin family. As to quaternary structure, heterotetramer of two alpha chains and two beta chains. As to expression, red blood cells.

Its function is as follows. Involved in oxygen transport from the lung to the various peripheral tissues. The polypeptide is Hemoglobin subunit beta (HBB) (Anser anser anser (Western greylag goose)).